A 428-amino-acid polypeptide reads, in one-letter code: Involucrin (428 aa).

Disordered stretches follow at residues 1–128 (MSQQ…EEKK) and 140–398 (KRDD…GQAQ). The span at 56–76 (PSKHEEKHVTIVKGVPEHECE) shows a compositional bias: basic and acidic residues. The span at 77–92 (QQQQAQGQERQQQHWG) shows a compositional bias: low complexity. 3 stretches are compositionally biased toward basic and acidic residues: residues 107 to 117 (LKQEEAQREKQ), 162 to 174 (QLKHLEQQEKPLE), and 192 to 208 (QLKHLEEQKGQLKHLEQ). Over residues 209-218 (QEGQLELPEQ) the composition is skewed to low complexity. The span at 220 to 297 (DQPKHLEQLE…CEGQLEHLEQ (78 aa)) shows a compositional bias: basic and acidic residues. A compositionally biased stretch (low complexity) spans 298–311 (QEGQLELPEQQVGQ). Composition is skewed to basic and acidic residues over residues 313-327 (KHLEQEEKQLEHPEQ), 352-366 (KHLEQQEKQLEHPEQ), and 374-385 (QLKDLEQQERQL).

Belongs to the involucrin family. Directly or indirectly cross-linked to cornifelin (CNFN). Post-translationally, substrate of transglutaminase. Specific glutamines or lysines are cross-linked to keratins, desmoplakin and to inter involucrin molecules. As to expression, keratinocytes of epidermis and other stratified squamous epithelia.

The protein localises to the cytoplasm. Functionally, part of the insoluble cornified cell envelope (CE) of stratified squamous epithelia. The protein is Involucrin (IVL) of Cebus albifrons (White-fronted capuchin).